The chain runs to 336 residues: 3-isopropylmalate dehydrogenase (336 aa).

Substrate-binding residues include Arg-87, Arg-97, Arg-121, and Asp-211. 3 residues coordinate Mg(2+): Asp-211, Asp-235, and Asp-239. An NAD(+)-binding site is contributed by 271-283; that stretch reads GSAPDIAGQGIAD.

Belongs to the isocitrate and isopropylmalate dehydrogenases family. LeuB type 2 subfamily. As to quaternary structure, homodimer. It depends on Mg(2+) as a cofactor. Requires Mn(2+) as cofactor.

It is found in the cytoplasm. It catalyses the reaction (2R,3S)-3-isopropylmalate + NAD(+) = 4-methyl-2-oxopentanoate + CO2 + NADH. The protein operates within amino-acid biosynthesis; L-leucine biosynthesis; L-leucine from 3-methyl-2-oxobutanoate: step 3/4. Its function is as follows. Catalyzes the oxidation of 3-carboxy-2-hydroxy-4-methylpentanoate (3-isopropylmalate) to 3-carboxy-4-methyl-2-oxopentanoate. The product decarboxylates to 4-methyl-2 oxopentanoate. This Mycobacterium sp. (strain JLS) protein is 3-isopropylmalate dehydrogenase.